We begin with the raw amino-acid sequence, 656 residues long: Chaperone protein DnaK (656 aa).

T204 is subject to Phosphothreonine; by autocatalysis. The disordered stretch occupies residues 602-656 (KLAERVYAKKGGAAGAPPGGEAEGEPQAQAGGKKEDVVDAEFEEVKDEKKKDEDK). The segment covering 620–632 (GGEAEGEPQAQAG) has biased composition (low complexity). Positions 647 to 656 (KDEKKKDEDK) are enriched in basic and acidic residues.

This sequence belongs to the heat shock protein 70 family.

Functionally, acts as a chaperone. This chain is Chaperone protein DnaK, found in Coxiella burnetii (strain CbuG_Q212) (Coxiella burnetii (strain Q212)).